The primary structure comprises 202 residues: dITP/XTP pyrophosphatase (202 aa).

10–15 serves as a coordination point for substrate; it reads TSNRHK. Catalysis depends on D70, which acts as the Proton acceptor. Residue D70 coordinates Mg(2+). Residues S71, 153–156, K176, and 181–182 each bind substrate; these read FGYD and HR.

It belongs to the HAM1 NTPase family. Homodimer. Requires Mg(2+) as cofactor.

It catalyses the reaction XTP + H2O = XMP + diphosphate + H(+). The enzyme catalyses dITP + H2O = dIMP + diphosphate + H(+). It carries out the reaction ITP + H2O = IMP + diphosphate + H(+). Functionally, pyrophosphatase that catalyzes the hydrolysis of nucleoside triphosphates to their monophosphate derivatives, with a high preference for the non-canonical purine nucleotides XTP (xanthosine triphosphate), dITP (deoxyinosine triphosphate) and ITP. Seems to function as a house-cleaning enzyme that removes non-canonical purine nucleotides from the nucleotide pool, thus preventing their incorporation into DNA/RNA and avoiding chromosomal lesions. The sequence is that of dITP/XTP pyrophosphatase from Methylacidiphilum infernorum (isolate V4) (Methylokorus infernorum (strain V4)).